We begin with the raw amino-acid sequence, 39 residues long: Photosystem II reaction center protein Psb30 (39 aa).

Residues 12–32 form a helical membrane-spanning segment; the sequence is IFQLTFVALIMLAGPFVIFLL.

This sequence belongs to the Psb30/Ycf12 family. In terms of assembly, PSII is composed of 1 copy each of membrane proteins PsbA, PsbB, PsbC, PsbD, PsbE, PsbF, PsbH, PsbI, PsbJ, PsbK, PsbL, PsbM, PsbT, PsbX, PsbY, PsbZ, Psb30/Ycf12, peripheral proteins PsbO, CyanoQ (PsbQ), PsbU, PsbV and a large number of cofactors. It forms dimeric complexes.

The protein localises to the cellular thylakoid membrane. In terms of biological role, a core subunit of photosystem II (PSII), probably helps stabilize the reaction center. This chain is Photosystem II reaction center protein Psb30, found in Microcystis aeruginosa (strain NIES-843 / IAM M-2473).